Reading from the N-terminus, the 512-residue chain is Cytochrome P450 4d1 (512 aa).

The heme site is built by E316 and C456.

Belongs to the cytochrome P450 family. Requires heme as cofactor.

The protein localises to the endoplasmic reticulum membrane. It is found in the microsome membrane. Its function is as follows. Involved in the metabolism of insect hormones and in the breakdown of synthetic insecticides. In Drosophila simulans (Fruit fly), this protein is Cytochrome P450 4d1 (Cyp4d1).